The primary structure comprises 63 residues: Light-harvesting protein B-800/850 alpha chain (63 aa).

Over 1–14 (MNNAKMWLVVKPTV) the chain is Cytoplasmic. The helical transmembrane segment at 15–35 (GIPLFLVACAIASFLVHLMLV) threads the bilayer. Histidine 31 contacts a bacteriochlorophyll. Residues 36 to 63 (LTTGWMGDYYSGSFEAASLVSNATTLLS) are Periplasmic-facing.

It belongs to the antenna complex alpha subunit family. The core complex is formed by different alpha and beta chains, binding bacteriochlorophyll molecules, and arranged most probably in tetrameric structures disposed around the reaction center. The non-pigmented gamma chains may constitute additional components.

It localises to the cell inner membrane. Antenna complexes are light-harvesting systems, which transfer the excitation energy to the reaction centers. This Rhodovulum sulfidophilum (Rhodobacter sulfidophilus) protein is Light-harvesting protein B-800/850 alpha chain (pucA).